Reading from the N-terminus, the 683-residue chain is DNA polymerase alpha-associated DNA helicase A (683 aa).

ATP is bound at residue 229–236; sequence GPPGTGKT.

This sequence belongs to the DNA2/NAM7 helicase family. As to quaternary structure, associates with the hexameric DNA polymerase alpha.

It is found in the cytoplasm. It localises to the nucleus. It carries out the reaction ATP + H2O = ADP + phosphate + H(+). Functionally, DNA polymerase alpha-associated DNA helicase which may be involved in DNA replication. The polypeptide is DNA polymerase alpha-associated DNA helicase A (HCS1) (Saccharomyces cerevisiae (strain ATCC 204508 / S288c) (Baker's yeast)).